A 131-amino-acid polypeptide reads, in one-letter code: Small ribosomal subunit protein uS9 (131 aa).

Residues 102–131 form a disordered region; that stretch reads AGFLTRDPRMKERRKYGLKKARKAPQFSKR. Over residues 112–131 the composition is skewed to basic residues; it reads KERRKYGLKKARKAPQFSKR.

Belongs to the universal ribosomal protein uS9 family.

This Desulfitobacterium hafniense (strain DSM 10664 / DCB-2) protein is Small ribosomal subunit protein uS9.